Reading from the N-terminus, the 160-residue chain is SsrA-binding protein (160 aa).

It belongs to the SmpB family.

The protein resides in the cytoplasm. In terms of biological role, required for rescue of stalled ribosomes mediated by trans-translation. Binds to transfer-messenger RNA (tmRNA), required for stable association of tmRNA with ribosomes. tmRNA and SmpB together mimic tRNA shape, replacing the anticodon stem-loop with SmpB. tmRNA is encoded by the ssrA gene; the 2 termini fold to resemble tRNA(Ala) and it encodes a 'tag peptide', a short internal open reading frame. During trans-translation Ala-aminoacylated tmRNA acts like a tRNA, entering the A-site of stalled ribosomes, displacing the stalled mRNA. The ribosome then switches to translate the ORF on the tmRNA; the nascent peptide is terminated with the 'tag peptide' encoded by the tmRNA and targeted for degradation. The ribosome is freed to recommence translation, which seems to be the essential function of trans-translation. The sequence is that of SsrA-binding protein from Shewanella amazonensis (strain ATCC BAA-1098 / SB2B).